The primary structure comprises 315 residues: Ribosomal RNA small subunit methyltransferase H (315 aa).

S-adenosyl-L-methionine-binding positions include 33 to 35 (GGH), aspartate 52, phenylalanine 84, aspartate 106, and glutamine 113. The disordered stretch occupies residues 295–315 (SDELEENNRSHSAKLRVAEKL).

This sequence belongs to the methyltransferase superfamily. RsmH family.

It localises to the cytoplasm. It catalyses the reaction cytidine(1402) in 16S rRNA + S-adenosyl-L-methionine = N(4)-methylcytidine(1402) in 16S rRNA + S-adenosyl-L-homocysteine + H(+). Specifically methylates the N4 position of cytidine in position 1402 (C1402) of 16S rRNA. This Lactobacillus gasseri (strain ATCC 33323 / DSM 20243 / BCRC 14619 / CIP 102991 / JCM 1131 / KCTC 3163 / NCIMB 11718 / NCTC 13722 / AM63) protein is Ribosomal RNA small subunit methyltransferase H.